We begin with the raw amino-acid sequence, 251 residues long: Thiamine thiazole synthase (251 aa).

Residues serine 34, 53 to 54 (EK), glycine 61, valine 125, and 151 to 153 (HVD) each bind NAD(+). Positions 153 and 168 each coordinate Fe cation. NAD(+) is bound at residue methionine 216. Arginine 226 provides a ligand contact to glycine.

It belongs to the THI4 family. Homooctamer; tetramer of dimers. It depends on Fe(2+) as a cofactor.

The catalysed reaction is hydrogen sulfide + glycine + NAD(+) = ADP-5-ethyl-4-methylthiazole-2-carboxylate + nicotinamide + 3 H2O + H(+). Its pathway is cofactor biosynthesis; thiamine diphosphate biosynthesis. Its function is as follows. Involved in the biosynthesis of the thiazole moiety of thiamine. Catalyzes the conversion of NAD and glycine to adenosine diphosphate 5-(2-hydroxyethyl)-4-methylthiazole-2-carboxylate (ADT), an adenylated thiazole intermediate, using free sulfide as a source of sulfur. The chain is Thiamine thiazole synthase from Thermococcus kodakarensis (strain ATCC BAA-918 / JCM 12380 / KOD1) (Pyrococcus kodakaraensis (strain KOD1)).